The following is a 146-amino-acid chain: Large ribosomal subunit protein uL15 (146 aa).

The disordered stretch occupies residues 1 to 64 (MELNSIKPAA…MPMHRRLPKR (64 aa)). Over residues 30–39 (TATKGHKGQK) the composition is skewed to basic residues.

The protein belongs to the universal ribosomal protein uL15 family. As to quaternary structure, part of the 50S ribosomal subunit.

In terms of biological role, binds to the 23S rRNA. The sequence is that of Large ribosomal subunit protein uL15 from Geotalea daltonii (strain DSM 22248 / JCM 15807 / FRC-32) (Geobacter daltonii).